The primary structure comprises 296 residues: Glycine N-acyltransferase (296 aa).

N6-acetyllysine; alternate is present on residues Lys-16, Lys-127, and Lys-141. Lys-16, Lys-127, and Lys-141 each carry N6-succinyllysine; alternate. Residue Lys-159 is modified to N6-acetyllysine. Residue Lys-169 is modified to N6-succinyllysine. An N6-acetyllysine; alternate mark is found at Lys-183 and Lys-256. Lys-183 and Lys-256 each carry N6-succinyllysine; alternate.

The protein belongs to the glycine N-acyltransferase family. Predominantly expressed in liver (at protein level) and kidney. Down-regulated in hepatocellular carcinoma and other liver cancers.

It is found in the mitochondrion. It carries out the reaction an acyl-CoA + glycine = an N-acylglycine + CoA + H(+). The catalysed reaction is benzoyl-CoA + glycine = N-benzoylglycine + CoA + H(+). Functionally, mitochondrial acyltransferase which transfers an acyl group to the N-terminus of glycine and glutamine, although much less efficiently. Can conjugate numerous substrates to form a variety of N-acylglycines, with a preference for benzoyl-CoA over phenylacetyl-CoA as acyl donors. Thereby detoxify xenobiotics, such as benzoic acid or salicylic acid, and endogenous organic acids, such as isovaleric acid. This Homo sapiens (Human) protein is Glycine N-acyltransferase (GLYAT).